Here is a 491-residue protein sequence, read N- to C-terminus: Protein ICE2 (491 aa).

Over 1-13 (MTSLSKSFMQSGR) the chain is Cytoplasmic. Residues 14 to 34 (ICAACFYLLFTLLSIPISFKV) traverse the membrane as a helical segment. Over 35–40 (GGLECG) the chain is Lumenal. The chain crosses the membrane as a helical span at residues 41 to 61 (LSFTVTLFTLYFITTTLNVLA). At 62–74 (RRHGGRLYIFFTN) the chain is on the cytoplasmic side. Residues 75–95 (CLYYSQHFIIASLLYLFLSGF) traverse the membrane as a helical segment. The Lumenal segment spans residues 96–149 (SNDELGNVLKNKYNESESFLEALKNSLNSNQINYVLYYYYYRFVVQPWQFVLTK). Residues 150 to 170 (STPFFTLSEGFFTILAIQAVG) traverse the membrane as a helical segment. The Cytoplasmic segment spans residues 171 to 184 (ETNRWLSNDLNSNT). A helical transmembrane segment spans residues 185–205 (WIISSLLTSGGVITASLYYLY). At 206–218 (RIYVTPIWPLSIQ) the chain is on the lumenal side. A helical membrane pass occupies residues 219-239 (TASLLGLVLSMVCGLGLYGIV). At 240 to 294 (SQKGSVIESSLFFAYIVRCIYEISPKLATTATDEILNLFKDVWQKHQRNLPTADN) the chain is on the cytoplasmic side. The chain crosses the membrane as a helical span at residues 295 to 315 (LLCYFHNVILKNAEVLWGSFI). The Lumenal portion of the chain corresponds to 316 to 373 (PRGRKKTGDFHDKLISILSFEKVSLISKPFWKFFKNFTFSVPLSINEFCQVTIKMASE). The chain crosses the membrane as a helical span at residues 374–394 (SVSPAIVINLCFRVLMFYSAT). Topologically, residues 395 to 413 (RIIPALQRKNDKQLRKSRR) are cytoplasmic. Residues 414–434 (IMKGLYWYSPCILIAMYTHLI) traverse the membrane as a helical segment. At 435–461 (LQYSGELKKDLCIWGCSEKWFGVDQPE) the chain is on the lumenal side. Residues 462–482 (IIVDSWGFWNWCNIFCTILVY) traverse the membrane as a helical segment. Over 483–491 (ATELIGSGS) the chain is Cytoplasmic.

It localises to the endoplasmic reticulum membrane. This chain is Protein ICE2 (ICE2), found in Saccharomyces cerevisiae (strain ATCC 204508 / S288c) (Baker's yeast).